Consider the following 97-residue polypeptide: Kininogen-1 (97 aa).

An N-terminal signal peptide occupies residues 1–23; sequence MRLWFCLSFLIILCVEHFPGTLA.

It belongs to the bradykinin-related peptide family. In terms of tissue distribution, expressed by the skin glands.

The protein resides in the secreted. Its function is as follows. [Ala3,Thr6]bradykinin: produces in vitro relaxation of rat arterial smooth muscle and constriction of intestinal smooth muscle. Possesses insulin-releasing activity. May target bradykinin receptors (BDKRB). The sequence is that of Kininogen-1 from Bombina variegata (Yellow-bellied toad).